We begin with the raw amino-acid sequence, 406 residues long: MDIQRFLKFYKVGWKTYRDPLMEASHSSIYYWREQMKAMALFTTTEERLLPYRSKWHTLVYIQMVIFFASMSFGLTESMGDHVQMGRDLAFILGAFFIIFKTYYFCWYGDELDQVISDLDALHPWAQKGPNPVEYQTGKRWYFVMAFFLATSWSFFLCILLLLLITSPMWVHQQNLPFHAAFPFQWHEKSLHPISHAIIYLFQSYFAVYCLTWLLCIEGLSICIYAEITFGIEVLCLELRQIHRHNYGLQELRMETNRLVKLHQKIVEILDRTNDVFHGTLIMQMGVNFSLVSLSVLEAVEARKDPKVVAQFAVLMLLALGHLSMWSYCGDQLSQKSLQISEAAYEAYDPTKGSKDVYRDLCVIIRRGQDPLIMRASPFPSFNLINYSAILNQCYGILTFLLKTLD.

Residues 1 to 55 (MDIQRFLKFYKVGWKTYRDPLMEASHSSIYYWREQMKAMALFTTTEERLLPYRSK) lie on the Cytoplasmic side of the membrane. The chain crosses the membrane as a helical span at residues 56 to 76 (WHTLVYIQMVIFFASMSFGLT). The Extracellular portion of the chain corresponds to 77 to 88 (ESMGDHVQMGRD). The helical transmembrane segment at 89-109 (LAFILGAFFIIFKTYYFCWYG) threads the bilayer. Residues 110–144 (DELDQVISDLDALHPWAQKGPNPVEYQTGKRWYFV) are Cytoplasmic-facing. The helical transmembrane segment at 145–165 (MAFFLATSWSFFLCILLLLLI) threads the bilayer. At 166–218 (TSPMWVHQQNLPFHAAFPFQWHEKSLHPISHAIIYLFQSYFAVYCLTWLLCIE) the chain is on the extracellular side. A helical membrane pass occupies residues 219–239 (GLSICIYAEITFGIEVLCLEL). Topologically, residues 240–275 (RQIHRHNYGLQELRMETNRLVKLHQKIVEILDRTND) are cytoplasmic. The chain crosses the membrane as a helical span at residues 276–296 (VFHGTLIMQMGVNFSLVSLSV). Residues 297–307 (LEAVEARKDPK) lie on the Extracellular side of the membrane. The chain crosses the membrane as a helical span at residues 308 to 328 (VVAQFAVLMLLALGHLSMWSY). The Cytoplasmic segment spans residues 329–381 (CGDQLSQKSLQISEAAYEAYDPTKGSKDVYRDLCVIIRRGQDPLIMRASPFPS). The chain crosses the membrane as a helical span at residues 382 to 402 (FNLINYSAILNQCYGILTFLL). Over 403-406 (KTLD) the chain is Extracellular.

This sequence belongs to the insect chemoreceptor superfamily. Heteromeric odorant receptor channel (TC 1.A.69) family. Or49a subfamily. Interacts with Orco. Complexes exist early in the endomembrane system in olfactory sensory neurons (OSNs), coupling these complexes to the conserved ciliary trafficking pathway.

The protein resides in the cell membrane. Odorant receptor which mediates acceptance or avoidance behavior, depending on its substrates. The odorant receptor repertoire encodes a large collection of odor stimuli that vary widely in identity, intensity, and duration. May form a complex with Orco to form odorant-sensing units, providing sensitive and prolonged odorant signaling and calcium permeability. This Drosophila melanogaster (Fruit fly) protein is Putative odorant receptor 65b (Or65b).